The sequence spans 954 residues: MTELLQSLNTQHEFVGRHNGPNHADQQKMLSTINAESLDALIAQTVPAQIRLEKPMQLAEAQSEADMLASIKKFADLNQVKRTFIGQGYYNTFTPNVILRNVLENPGWYTAYTPYQPEISQGRLESLLNYQQMVMDLTGMDIANASLLDEATAAAEAMTLCQRAGKSKSKVFFVADDVHPQTIEVIKTRAKYFGFDVVIGNVDALPQTEAFGALLQYPSTTGEVRDLTDVIAQAQANKTLVSVATDLLASALVKPAGEMGADVVIGSAQRFGVPMGYGGPHAAFMATREQHKRTMPGRVIGVSIDAKGNQALRMAMQTREQHIRREKATSNICTAQALLANMASFFAVYHGEEGIRTIARRTHHMTAILAAGLTKSGYELAHNAFFDTITINTGDKTQALYAKAQAADINLRLLDGQIGISFDETTTVADIDALFAIFDVKESVNALSTDIAGNEFAAIPEACRRTSRFLSHPVFNTHHSETQMMRYLKQLENKDFSLTHGMIPLGSCTMKLNAAAEMIPVTWPEFGALHPFAPIEQAAGYTALAEDLKAKLCEITGYDAFSLQPNSGASGEYAGLIAIQRYHESRGEGHRNVCLIPSSAHGTNPATAAMVSMKVVVVKCDENGNIDLVDLAAKIEKHQENLSSIMITYPSTHGVYEEQVKEVCEMVHAAGGQVYLDGANMNAQVGLTSPGFIGSDVSHLNLHKTFCIPHGGGGPGMGPIGVKSHLAPFLPGHIENGVEGKEFAVSAADLGSASILPISWAYIAMMGADGLTEATKVAILNANYVMERLRPHYPVLYRGTNGRVAHECIIDIRPLKEETGISEEDIAKRLMDYGFHAPTMSFPVAGTLMVEPTESEDLEELDRFCDAMIAIREEMTKVKNGEWPLENNPLVNAPHTQVDLMEEQWDRPYPREIACFPSAATKRSKYWPTVNRVDNVYGDRNLVCSCPGIENYEE.

K704 bears the N6-(pyridoxal phosphate)lysine mark.

It belongs to the GcvP family. As to quaternary structure, the glycine cleavage system is composed of four proteins: P, T, L and H. It depends on pyridoxal 5'-phosphate as a cofactor.

The catalysed reaction is N(6)-[(R)-lipoyl]-L-lysyl-[glycine-cleavage complex H protein] + glycine + H(+) = N(6)-[(R)-S(8)-aminomethyldihydrolipoyl]-L-lysyl-[glycine-cleavage complex H protein] + CO2. The glycine cleavage system catalyzes the degradation of glycine. The P protein binds the alpha-amino group of glycine through its pyridoxal phosphate cofactor; CO(2) is released and the remaining methylamine moiety is then transferred to the lipoamide cofactor of the H protein. The sequence is that of Glycine dehydrogenase (decarboxylating) from Vibrio vulnificus (strain YJ016).